Here is a 143-residue protein sequence, read N- to C-terminus: Endoribonuclease YbeY (143 aa).

His109, His113, and His119 together coordinate Zn(2+).

Belongs to the endoribonuclease YbeY family. Zn(2+) is required as a cofactor.

It localises to the cytoplasm. In terms of biological role, single strand-specific metallo-endoribonuclease involved in late-stage 70S ribosome quality control and in maturation of the 3' terminus of the 16S rRNA. In Leptospira borgpetersenii serovar Hardjo-bovis (strain JB197), this protein is Endoribonuclease YbeY.